A 290-amino-acid chain; its full sequence is Coiled-coil domain-containing protein 137 (290 aa).

4 disordered regions span residues 1–92 (MARP…EAQV), 98–117 (LEKEAKGEEPDIAVPKFKQR), 139–181 (LSKN…EARA), and 269–290 (RQEMTPAQPPGSSFQRQGHACL). Residues 20 to 39 (SGQPQGRRQQQAQGQQRSAS) show a composition bias toward low complexity. Positions 56 to 79 (KNQDEQEIPFRLREIMRSRQEMKK) are enriched in basic and acidic residues. Residues 66 to 89 (RLREIMRSRQEMKKTLSNKKRKKE) adopt a coiled-coil conformation. Residues 154 to 163 (PKKEKSERKK) are compositionally biased toward basic and acidic residues. Positions 155–192 (KKEKSERKKAFQKRRLEKAQRKREARAVDRLEQELLKD) form a coiled coil. The segment covering 164 to 178 (AFQKRRLEKAQRKRE) has biased composition (basic residues).

It is found in the chromosome. This is Coiled-coil domain-containing protein 137 (Ccdc137) from Mus musculus (Mouse).